The following is a 249-amino-acid chain: Homeobox protein TGIF2LX (249 aa).

Disordered stretches follow at residues 1 to 62 (MEAA…KRKG) and 126 to 192 (DPIV…KLTV). Positions 9–27 (AETRSRVEKDSRRAKKDSP) are enriched in basic and acidic residues. A compositionally biased stretch (polar residues) spans 28–46 (AKTQSPAQDTSIMLRNNAD). Positions 55 to 118 (EHKKKRKGYL…INARRRILPD (64 aa)) form a DNA-binding region, homeobox; TALE-type. A compositionally biased stretch (polar residues) spans 159 to 172 (DNVQSLPLRSSPKG).

It belongs to the TALE/TGIF homeobox family.

The protein resides in the nucleus. In terms of biological role, may have a transcription role in testis. The protein is Homeobox protein TGIF2LX (TGIF2LX) of Macaca fascicularis (Crab-eating macaque).